The sequence spans 309 residues: NAD kinase (309 aa).

Asp89 (proton acceptor) is an active-site residue. NAD(+) contacts are provided by residues 89 to 90, 163 to 164, His174, Arg191, Asp193, and 204 to 209; these read DG, NE, and TAYSLS.

It belongs to the NAD kinase family. Requires a divalent metal cation as cofactor.

It localises to the cytoplasm. The catalysed reaction is NAD(+) + ATP = ADP + NADP(+) + H(+). Functionally, involved in the regulation of the intracellular balance of NAD and NADP, and is a key enzyme in the biosynthesis of NADP. Catalyzes specifically the phosphorylation on 2'-hydroxyl of the adenosine moiety of NAD to yield NADP. The chain is NAD kinase from Shewanella frigidimarina (strain NCIMB 400).